Here is a 118-residue protein sequence, read N- to C-terminus: Ribonuclease P protein component 2 (118 aa).

This sequence belongs to the eukaryotic/archaeal RNase P protein component 2 family. As to quaternary structure, consists of a catalytic RNA component and at least 4-5 protein subunits.

It is found in the cytoplasm. It carries out the reaction Endonucleolytic cleavage of RNA, removing 5'-extranucleotides from tRNA precursor.. In terms of biological role, part of ribonuclease P, a protein complex that generates mature tRNA molecules by cleaving their 5'-ends. The sequence is that of Ribonuclease P protein component 2 from Pyrococcus abyssi (strain GE5 / Orsay).